Here is a 379-residue protein sequence, read N- to C-terminus: Nucleosome assembly protein 1;2 (379 aa).

Residues 26 to 80 (VNALKNKLQNLAGQHSDVLENLTPPVRKRVEFLREIQNQYDEMEAKFFEERAALE) are a coiled coil. S41 is subject to Phosphoserine. A Nuclear export signal motif is present at residues 47 to 62 (LTPPVRKRVEFLREIQ). Positions 222 to 227 (KKKPKK) match the Nuclear localization signal motif. The segment at 298 to 379 (AVEADDLDIE…GERPPECKQQ (82 aa)) is disordered. The segment covering 299-342 (VEADDLDIEDDDDEIDEDDDEEDEEDDEDDEEEDDEDDDEEEEA) has biased composition (acidic residues). Residues 347–360 (KSKKKSSAGHKKAG) are compositionally biased toward basic residues. C376 is modified (cysteine methyl ester). C376 is lipidated: S-farnesyl cysteine. A propeptide spans 377–379 (KQQ) (removed in mature form).

It belongs to the nucleosome assembly protein (NAP) family. Can form homomeric and heteromeric protein complexes with NAP1;1, NAP1;3 and NAP1;4. Binds histone H2A. Ubiquitous.

The protein localises to the nucleus. The protein resides in the cytoplasm. May modulate chromatin structure by regulation of nucleosome assembly/disassembly. May function in nucleotide excision repair (NER). Involved in somatic homologous recombination. The polypeptide is Nucleosome assembly protein 1;2 (NAP1;2) (Arabidopsis thaliana (Mouse-ear cress)).